We begin with the raw amino-acid sequence, 88 residues long: Long neurotoxin 20 (88 aa).

The signal sequence occupies residues 1–21 (MKTLLLTLVVVTIVCLDLGNS). 5 disulfide bridges follow: Cys-24–Cys-42, Cys-35–Cys-63, Cys-48–Cys-52, Cys-67–Cys-78, and Cys-79–Cys-84.

It belongs to the three-finger toxin family. Long-chain subfamily. Type II alpha-neurotoxin sub-subfamily. Expressed by the venom gland.

It is found in the secreted. In terms of biological role, binds with high affinity to muscular (alpha-1/CHRNA1) and neuronal (alpha-7/CHRNA7) nicotinic acetylcholine receptor (nAChR) and inhibits acetylcholine from binding to the receptor, thereby impairing neuromuscular and neuronal transmission. The chain is Long neurotoxin 20 from Drysdalia coronoides (White-lipped snake).